The sequence spans 593 residues: MDVRRRSINSIHQIPSVGGTAPPMLKPKQPTKVDAVDLPDSPKASDALPLPLYITNGVFFTLFFTVVYYLLVRWREKIRNSTPLHVVTLSEIAAIFTFVASFIYLLGFFGIGLVQPFTSRSSHDDVWGVDDDEDVDEIVLKEDTRTVPCAAAPVDCPLPPIKPKVVDPVPISPPSSEEDEEIIKSVVEGTTPSYALESKLGDSHRAAAIRREALQRMTKKSLAGLPLDGFDYDSILGQCCEMPVGYVQIPVGIAGPLLLDGREYSVPMATTEGCLVASTNRGCKAIFACGGATSVLLRDAMTRAPVVRFGSAKRAADLKFFLENPLNFETLAAVFNSSSRFGKLQNIKCAIAGKNLYMRYSCSTGDAMGMNMISKGVQNVLDFLQDDFPDMDVIGISGNYCSDKKPAAVNWIEGRGKSVVCEAVIKEEVVKKVLKTNVASLVELNMLKNLTGSAMAGALGGFNAHASNIVSAVYLATGQDPAQNVESSHCITMMEAINDGKDLHVSVTMPSIEVGTVGGGTQLASQSACLNLLGVKGASKEAPGSNARLLATIVAGSVLAGELSLMSAIAAGQLVNSHMKYNRSNKDVTKASS.

Positions 1–36 (MDVRRRSINSIHQIPSVGGTAPPMLKPKQPTKVDAV) are disordered. Transmembrane regions (helical) follow at residues 52 to 72 (LYITNGVFFTLFFTVVYYLLV) and 94 to 114 (AIFTFVASFIYLLGFFGIGLV). Positions 115-177 (QPFTSRSSHD…PVPISPPSSE (63 aa)) are linker. The segment at 178 to 593 (EDEEIIKSVV…SNKDVTKASS (416 aa)) is catalytic. The Charge relay system role is filled by E272. N336 carries an N-linked (GlcNAc...) asparagine glycan. Catalysis depends on K404, which acts as the Charge relay system. An N-linked (GlcNAc...) asparagine glycan is attached at N449. The active-site Charge relay system is the D480. The active-site Proton donor is H578. The N-linked (GlcNAc...) asparagine glycan is linked to N582.

This sequence belongs to the HMG-CoA reductase family.

It localises to the endoplasmic reticulum membrane. The catalysed reaction is (R)-mevalonate + 2 NADP(+) + CoA = (3S)-3-hydroxy-3-methylglutaryl-CoA + 2 NADPH + 2 H(+). The protein operates within metabolic intermediate biosynthesis; (R)-mevalonate biosynthesis; (R)-mevalonate from acetyl-CoA: step 3/3. Functionally, catalyzes the synthesis of mevalonate. The specific precursor of all isoprenoid compounds present in plants. This Camptotheca acuminata (Happy tree) protein is 3-hydroxy-3-methylglutaryl-coenzyme A reductase.